The primary structure comprises 225 residues: Claudin-17 (225 aa).

The Cytoplasmic segment spans residues 1–7 (MAFYPLQ). Residues 8–28 (IAGLVLGFLGMVGTLATTLLP) form a helical membrane-spanning segment. At 29–81 (QWRVSAFIGSNIIVFERIWEGLWMNCVRQAKARLQCKFYSSMLALSPALEAAR) the chain is on the extracellular side. The helical transmembrane segment at 82-102 (ALMCVAVALSLIALIIGICGM) threads the bilayer. Over 103-124 (KKIQCTGSNERAKAYLLGTSGV) the chain is Cytoplasmic. Residues 125-145 (LFILTGIFVLIPVCWTANIII) form a helical membrane-spanning segment. Over 146–164 (RDFYNPAVHVGQKRELGAA) the chain is Extracellular. The helical transmembrane segment at 165-185 (LFLGWASVAVLFIAGGLLCGF) threads the bilayer. Over 186–225 (CCCNRKKQRDGYPAPRPSMPRTDERRRNMTRQSETPTSYV) the chain is Cytoplasmic. The tract at residues 194–225 (RDGYPAPRPSMPRTDERRRNMTRQSETPTSYV) is disordered. The segment covering 215–225 (TRQSETPTSYV) has biased composition (polar residues).

It belongs to the claudin family. As to quaternary structure, does not form homotypic polymeric strands and it is not sufficient to form tight junctions by its own. Interacts with OCLN.

It localises to the cell junction. It is found in the tight junction. Its subcellular location is the cell membrane. It carries out the reaction chloride(in) = chloride(out). It catalyses the reaction hydrogencarbonate(in) = hydrogencarbonate(out). The enzyme catalyses bromide(in) = bromide(out). The catalysed reaction is iodide(out) = iodide(in). It carries out the reaction fluoride(in) = fluoride(out). It catalyses the reaction nitrate(in) = nitrate(out). The enzyme catalyses thiocyanate(in) = thiocyanate(out). In terms of biological role, channel-forming tight junction protein with selectivity for anions, including chloride and hydrogencarbonate, and for solutes smaller than 9 Angstrom in diameter. In the kidney proximal tubule, may be involved in quantitative reabsorption of filtered anions. Does not affect water permeability. The polypeptide is Claudin-17 (CLDN17) (Sus scrofa (Pig)).